Reading from the N-terminus, the 264-residue chain is Thymidylate synthase (264 aa).

Arg21 is a binding site for dUMP. His51 is a binding site for (6R)-5,10-methylene-5,6,7,8-tetrahydrofolate. Residue 126–127 participates in dUMP binding; it reads RR. Cys146 (nucleophile) is an active-site residue. DUMP contacts are provided by residues 166-169, Asn177, and 207-209; these read RSAD and HLY. A (6R)-5,10-methylene-5,6,7,8-tetrahydrofolate-binding site is contributed by Asp169. Ala263 contributes to the (6R)-5,10-methylene-5,6,7,8-tetrahydrofolate binding site.

Belongs to the thymidylate synthase family. Bacterial-type ThyA subfamily. As to quaternary structure, homodimer.

The protein resides in the cytoplasm. It carries out the reaction dUMP + (6R)-5,10-methylene-5,6,7,8-tetrahydrofolate = 7,8-dihydrofolate + dTMP. The protein operates within pyrimidine metabolism; dTTP biosynthesis. Catalyzes the reductive methylation of 2'-deoxyuridine-5'-monophosphate (dUMP) to 2'-deoxythymidine-5'-monophosphate (dTMP) while utilizing 5,10-methylenetetrahydrofolate (mTHF) as the methyl donor and reductant in the reaction, yielding dihydrofolate (DHF) as a by-product. This enzymatic reaction provides an intracellular de novo source of dTMP, an essential precursor for DNA biosynthesis. This chain is Thymidylate synthase, found in Rhodopirellula baltica (strain DSM 10527 / NCIMB 13988 / SH1).